A 457-amino-acid chain; its full sequence is Multidrug resistance protein MdtK (457 aa).

A run of 12 helical transmembrane segments spans residues 11–31 (LLAL…MGFV), 53–73 (IWLP…PVIA), 93–113 (WLAG…GYII), 127–147 (AVGY…FQVA), 160–180 (GMVM…IFIY), 188–208 (LGGI…FIAM), 243–263 (LPIA…ALLV), 276–296 (IALN…AAVT), 314–334 (AART…IFTV), 350–370 (VVAL…SDSI), 387–407 (IFFI…YILA), and 418–438 (PAGF…LMML).

This sequence belongs to the multi antimicrobial extrusion (MATE) (TC 2.A.66.1) family. MdtK subfamily.

The protein resides in the cell inner membrane. Multidrug efflux pump that functions probably as a Na(+)/drug antiporter. The polypeptide is Multidrug resistance protein MdtK (Salmonella newport (strain SL254)).